The following is a 199-amino-acid chain: Imidazole glycerol phosphate synthase subunit HisH (199 aa).

In terms of domain architecture, Glutamine amidotransferase type-1 spans Met1–Leu199. Catalysis depends on Cys79, which acts as the Nucleophile. Active-site residues include His180 and Glu182.

In terms of assembly, heterodimer of HisH and HisF.

The protein resides in the cytoplasm. The enzyme catalyses 5-[(5-phospho-1-deoxy-D-ribulos-1-ylimino)methylamino]-1-(5-phospho-beta-D-ribosyl)imidazole-4-carboxamide + L-glutamine = D-erythro-1-(imidazol-4-yl)glycerol 3-phosphate + 5-amino-1-(5-phospho-beta-D-ribosyl)imidazole-4-carboxamide + L-glutamate + H(+). It catalyses the reaction L-glutamine + H2O = L-glutamate + NH4(+). Its pathway is amino-acid biosynthesis; L-histidine biosynthesis; L-histidine from 5-phospho-alpha-D-ribose 1-diphosphate: step 5/9. Functionally, IGPS catalyzes the conversion of PRFAR and glutamine to IGP, AICAR and glutamate. The HisH subunit catalyzes the hydrolysis of glutamine to glutamate and ammonia as part of the synthesis of IGP and AICAR. The resulting ammonia molecule is channeled to the active site of HisF. The sequence is that of Imidazole glycerol phosphate synthase subunit HisH from Carboxydothermus hydrogenoformans (strain ATCC BAA-161 / DSM 6008 / Z-2901).